Reading from the N-terminus, the 629-residue chain is uncharacterized protein (629 aa).

4 disordered regions span residues 101-126 (SWKK…TPPT), 172-209 (PQKD…EEED), 315-339 (STPK…NSQR), and 448-468 (GENT…SEEP). Acidic residues predominate over residues 200–209 (TEEEEEEEED). The residue at position 334 (Ser334) is a Phosphoserine. The segment covering 448–463 (GENTANNGYGPQTLNE) has biased composition (polar residues).

This is an uncharacterized protein from Schizosaccharomyces pombe (strain 972 / ATCC 24843) (Fission yeast).